Consider the following 298-residue polypeptide: Aspartate carbamoyltransferase catalytic subunit (298 aa).

Carbamoyl phosphate-binding residues include Arg54 and Thr55. Lys82 is an L-aspartate binding site. Carbamoyl phosphate contacts are provided by Arg104, His132, and Gln135. Arg165 and Arg218 together coordinate L-aspartate. Carbamoyl phosphate is bound by residues Gly260 and Pro261.

The protein belongs to the aspartate/ornithine carbamoyltransferase superfamily. ATCase family. Heterododecamer (2C3:3R2) of six catalytic PyrB chains organized as two trimers (C3), and six regulatory PyrI chains organized as three dimers (R2).

The catalysed reaction is carbamoyl phosphate + L-aspartate = N-carbamoyl-L-aspartate + phosphate + H(+). It participates in pyrimidine metabolism; UMP biosynthesis via de novo pathway; (S)-dihydroorotate from bicarbonate: step 2/3. Catalyzes the condensation of carbamoyl phosphate and aspartate to form carbamoyl aspartate and inorganic phosphate, the committed step in the de novo pyrimidine nucleotide biosynthesis pathway. This Wolbachia sp. subsp. Brugia malayi (strain TRS) protein is Aspartate carbamoyltransferase catalytic subunit.